The following is a 1242-amino-acid chain: DNA polymerase catalytic subunit (1242 aa).

Disordered regions lie at residues Gly-14–Gln-38, Leu-644–Ser-665, and Ala-1109–Pro-1162. Residues Gly-653–Ser-665 are compositionally biased toward low complexity. A compositionally biased stretch (polar residues) spans Gln-1111 to Val-1125. The segment covering Glu-1145–Lys-1155 has biased composition (basic and acidic residues).

The protein belongs to the DNA polymerase type-B family. As to quaternary structure, forms a complex with the ssDNA-binding protein UL57, the DNA polymerase processivity factor UL44, and the alkaline exonuclease UL98. Interacts with the putative helicase-primase complex composed of UL70, UL102 and UL105 proteins; these interactions may coordinate leading and lagging strand DNA synthesis at the replication fork.

It is found in the host nucleus. The catalysed reaction is DNA(n) + a 2'-deoxyribonucleoside 5'-triphosphate = DNA(n+1) + diphosphate. Replicates viral genomic DNA in the late phase of lytic infection, producing long concatemeric DNA. The replication complex is composed of six viral proteins: the DNA polymerase, processivity factor, primase, primase-associated factor, helicase, and ssDNA-binding protein. This Homo sapiens (Human) protein is DNA polymerase catalytic subunit (UL54).